We begin with the raw amino-acid sequence, 322 residues long: Protein lin-56 (322 aa).

A disordered region spans residues 264-322 (SSQKLQQNGFPEKVEQMDKYSNKLKDEASDKKYEKPGKKDYVEEEGYWAPITDSEDDEA). Positions 275-304 (EKVEQMDKYSNKLKDEASDKKYEKPGKKDY) are enriched in basic and acidic residues.

As to expression, widely expressed throughout embryonic development. Expressed in the six multipotent ventral ectodermal blast cells, P3.p-P8.p, which generate the vulva and in their descendants throughout vulval development.

It localises to the nucleus. Functionally, required for translation, stability and/or localization of lin-15a. In Caenorhabditis elegans, this protein is Protein lin-56 (lin-56).